A 358-amino-acid polypeptide reads, in one-letter code: Programmed cell death protein 2-like (358 aa).

Ala-2 carries the N-acetylalanine modification. Ser-20 is subject to Phosphoserine. Thr-22 is subject to Phosphothreonine.

As to expression, higher expression in lung, colon, mammary gland, cervix, stomach and small intestine.

In terms of biological role, over-expression suppresses AP1, CREB, NFAT, and NF-kB transcriptional activation, and delays cell cycle progression at S phase. This chain is Programmed cell death protein 2-like (PDCD2L), found in Homo sapiens (Human).